The sequence spans 133 residues: Large ribosomal subunit protein uL15 (133 aa).

The interval 1–64 is disordered; it reads MGLENLKPAK…QPLQRRLPKI (64 aa).

This sequence belongs to the universal ribosomal protein uL15 family. As to quaternary structure, part of the 50S ribosomal subunit.

Its function is as follows. Binds to the 23S rRNA. This Helicobacter pylori (strain J99 / ATCC 700824) (Campylobacter pylori J99) protein is Large ribosomal subunit protein uL15.